The sequence spans 96 residues: MLNSYDLIRRPVITEKSMAAMADRQYTFIVDIRADKTQIKKAVEKVFGVKVEEVRTARFDGKVKRVGVHVGKRSDYKKAMVKLTEDSKTIEFFEGM.

This sequence belongs to the universal ribosomal protein uL23 family. Part of the 50S ribosomal subunit. Contacts protein L29, and trigger factor when it is bound to the ribosome.

In terms of biological role, one of the early assembly proteins it binds 23S rRNA. One of the proteins that surrounds the polypeptide exit tunnel on the outside of the ribosome. Forms the main docking site for trigger factor binding to the ribosome. The polypeptide is Large ribosomal subunit protein uL23 (Clostridium novyi (strain NT)).